A 655-amino-acid chain; its full sequence is 1-deoxy-D-xylulose-5-phosphate synthase (655 aa).

Residues His-73 and Ser-114–Ala-116 each bind thiamine diphosphate. Residue Asp-145 coordinates Mg(2+). Thiamine diphosphate is bound by residues Gly-146–Ala-147, Asn-174, Tyr-285, and Glu-367. Asn-174 is a Mg(2+) binding site. The segment at Arg-626–Arg-655 is disordered. Positions Arg-646–Arg-655 are enriched in basic and acidic residues.

Belongs to the transketolase family. DXPS subfamily. Homodimer. Mg(2+) serves as cofactor. Thiamine diphosphate is required as a cofactor.

It catalyses the reaction D-glyceraldehyde 3-phosphate + pyruvate + H(+) = 1-deoxy-D-xylulose 5-phosphate + CO2. It functions in the pathway metabolic intermediate biosynthesis; 1-deoxy-D-xylulose 5-phosphate biosynthesis; 1-deoxy-D-xylulose 5-phosphate from D-glyceraldehyde 3-phosphate and pyruvate: step 1/1. Functionally, catalyzes the acyloin condensation reaction between C atoms 2 and 3 of pyruvate and glyceraldehyde 3-phosphate to yield 1-deoxy-D-xylulose-5-phosphate (DXP). The sequence is that of 1-deoxy-D-xylulose-5-phosphate synthase from Frankia casuarinae (strain DSM 45818 / CECT 9043 / HFP020203 / CcI3).